A 131-amino-acid chain; its full sequence is Large-conductance mechanosensitive channel (131 aa).

3 helical membrane passes run 8-28, 30-50, and 67-87; these read FAIR…GAFG, IVSS…LGGI, and GAFI…FLFV.

It belongs to the MscL family. In terms of assembly, homopentamer.

The protein resides in the cell membrane. Its function is as follows. Channel that opens in response to stretch forces in the membrane lipid bilayer. May participate in the regulation of osmotic pressure changes within the cell. This chain is Large-conductance mechanosensitive channel, found in Geobacillus thermodenitrificans (strain NG80-2).